The chain runs to 68 residues: Protein SlyX homolog (68 aa).

Belongs to the SlyX family.

This is Protein SlyX homolog from Brucella suis (strain ATCC 23445 / NCTC 10510).